Consider the following 437-residue polypeptide: Serine hydroxymethyltransferase 2 (437 aa).

(6S)-5,6,7,8-tetrahydrofolate-binding positions include leucine 125 and 129–131 (GHL). At lysine 234 the chain carries N6-(pyridoxal phosphate)lysine.

The protein belongs to the SHMT family. Homodimer. Pyridoxal 5'-phosphate serves as cofactor.

Its subcellular location is the cytoplasm. The enzyme catalyses (6R)-5,10-methylene-5,6,7,8-tetrahydrofolate + glycine + H2O = (6S)-5,6,7,8-tetrahydrofolate + L-serine. The protein operates within one-carbon metabolism; tetrahydrofolate interconversion. Its pathway is amino-acid biosynthesis; glycine biosynthesis; glycine from L-serine: step 1/1. Its function is as follows. Catalyzes the reversible interconversion of serine and glycine with tetrahydrofolate (THF) serving as the one-carbon carrier. This reaction serves as the major source of one-carbon groups required for the biosynthesis of purines, thymidylate, methionine, and other important biomolecules. Also exhibits THF-independent aldolase activity toward beta-hydroxyamino acids, producing glycine and aldehydes, via a retro-aldol mechanism. The polypeptide is Serine hydroxymethyltransferase 2 (Mesorhizobium japonicum (strain LMG 29417 / CECT 9101 / MAFF 303099) (Mesorhizobium loti (strain MAFF 303099))).